The sequence spans 432 residues: Beta-fructosidase (432 aa).

Substrate contacts are provided by residues 14–17 (WMND), glutamine 33, tryptophan 41, 74–75 (FS), tyrosine 92, 137–138 (RD), 188–190 (EIE), threonine 208, and tryptophan 260. Residue aspartate 17 is part of the active site.

The protein belongs to the glycosyl hydrolase 32 family.

It carries out the reaction Hydrolysis of terminal non-reducing beta-D-fructofuranoside residues in beta-D-fructofuranosides.. Hydrolysis of sucrose, raffinose, inulin and levan. Specific for the fructose moiety and the beta-anomeric configuration of the glycosidic linkages of its substrates. The enzyme released fructose from sucrose and raffinose, and the fructose polymer inulin is hydrolyzed quantitatively in an exo-type fashion. The chain is Beta-fructosidase (bfrA) from Thermotoga maritima (strain ATCC 43589 / DSM 3109 / JCM 10099 / NBRC 100826 / MSB8).